Here is a 279-residue protein sequence, read N- to C-terminus: Sarcosine/dimethylglycine N-methyltransferase (279 aa).

It belongs to the methyltransferase superfamily. Monomer.

It catalyses the reaction sarcosine + 2 S-adenosyl-L-methionine = glycine betaine + 2 S-adenosyl-L-homocysteine + 2 H(+). The catalysed reaction is sarcosine + S-adenosyl-L-methionine = N,N-dimethylglycine + S-adenosyl-L-homocysteine + H(+). The enzyme catalyses N,N-dimethylglycine + S-adenosyl-L-methionine = glycine betaine + S-adenosyl-L-homocysteine + H(+). It functions in the pathway amine and polyamine biosynthesis; betaine biosynthesis via glycine pathway; betaine from glycine: step 2/3. The protein operates within amine and polyamine biosynthesis; betaine biosynthesis via glycine pathway; betaine from glycine: step 3/3. Its activity is regulated as follows. p-chloromercuribenzoate acid inhibits 23% of the SDMT activities on sarcosine and dimethylglycine, and S-adenosylhomocysteine (AdoHcy) inhibits completely GSMT activities. In terms of biological role, catalyzes the methylation of sarcosine and dimethylglycine to dimethylglycine and betaine, respectively, with S-adenosylmethionine (AdoMet) acting as the methyl donor. It has strict specificity for sarcosine and dimethylglycine as the methyl group acceptors. The chain is Sarcosine/dimethylglycine N-methyltransferase from Halorhodospira halochloris (Ectothiorhodospira halochloris).